The primary structure comprises 1550 residues: Adhesion G protein-coupled receptor L3 (1550 aa).

A signal peptide spans 1-19; it reads MCPPQLFILMMLLAPVVHG. At 20–948 the chain is on the extracellular side; it reads GKHNERHPAL…VHDLLLDVIT (929 aa). The segment at 34 to 80 is disordered; the sequence is RHAEHSPGGPLPPRHLLQQPAAERSTAHRGQGPRGTARGVRGPGAPG. Residues 103-192 enclose the SUEL-type lectin domain; the sequence is SCESYPIELR…KYLEVQYECV (90 aa). 5 cysteine pairs are disulfide-bonded: Cys-104–Cys-134, Cys-113–Cys-191, Cys-146–Cys-178, Cys-159–Cys-165, and Cys-203–Cys-385. N-linked (GlcNAc...) asparagine glycosylation is present at Asn-161. In terms of domain architecture, Olfactomedin-like spans 202-461; it reads LCPGLLKGVY…VVKYSLDFGP (260 aa). Residues 317–347 are interaction with FLRT3; that stretch reads YHDTSPYRWGGKSDIDLAVDENGLWVIYATE. The Ca(2+) site is built by Asp-332, Asn-380, Ala-381, and Val-435. The disordered stretch occupies residues 518-538; it reads NLGRSTTPSLPGRRNRSTSTP. 5 N-linked (GlcNAc...) asparagine glycosylation sites follow: Asn-532, Asn-616, Asn-839, Asn-884, and Asn-910. The region spanning 755–934 is the GAIN-B domain; sequence DIVRENTDNI…AVLMAHVEVK (180 aa). 2 cysteine pairs are disulfide-bonded: Cys-885–Cys-916 and Cys-904–Cys-918. A GPS region spans residues 885–934; that stretch reads CSFWSYSKRTMTGYWSTQGCRLLTTNKTHTTCSCNHLTNFAVLMAHVEVK. Positions 922 to 938 are stachel; the sequence is TNFAVLMAHVEVKHSDA. The helical transmembrane segment at 949 to 969 threads the bilayer; it reads WVGILLSLVCLLICIFTFCFF. Topologically, residues 970–977 are cytoplasmic; the sequence is RGLQSDRN. Residues 978–998 form a helical membrane-spanning segment; sequence TIHKNLCISLFVAELLFLIGI. Asn-999 carries an N-linked (GlcNAc...) asparagine glycan. The Extracellular portion of the chain corresponds to 999 to 1006; the sequence is NRTDQPIA. A helical transmembrane segment spans residues 1007-1027; sequence CAVFAALLHFFFLAAFTWMFL. The Cytoplasmic portion of the chain corresponds to 1028–1048; it reads EGVQLYIMLVEVFESEHSRRK. A helical transmembrane segment spans residues 1049 to 1069; it reads YFYLVGYGMPALIVAVSAAVD. Residues 1070–1087 are Extracellular-facing; the sequence is YRSYGTDKVCWLRLDTYF. A helical membrane pass occupies residues 1088–1108; it reads IWSFIGPATLIIMLNVIFLGI. The Cytoplasmic portion of the chain corresponds to 1109-1141; it reads ALYKMFHHTAILKPESGCLDNINYEDNRPFIKS. The helical transmembrane segment at 1142 to 1162 threads the bilayer; it reads WVIGAIALLCLLGLTWAFGLM. Topologically, residues 1163–1168 are extracellular; that stretch reads YINEST. Asn-1165 carries an N-linked (GlcNAc...) asparagine glycan. The chain crosses the membrane as a helical span at residues 1169–1189; sequence VIMAYLFTIFNSLQGMFIFIF. Topologically, residues 1190–1550 are cytoplasmic; the sequence is HCVLQKKVRK…KGPAHLVTSL (361 aa). Residues 1213-1236 form a disordered region; the sequence is KSTESSIGSGKTSGSRTPGRYSTG. Ser-1253 is subject to Phosphoserine. Disordered regions lie at residues 1410–1435 and 1528–1550; these read LLPPRVYSTDNHQPHHYSRRRLPQDH and PPNKDGASPEGTSKGPAHLVTSL. Ser-1535 is modified (phosphoserine). The PDZ-binding signature appears at 1545 to 1550; sequence HLVTSL.

The protein belongs to the G-protein coupled receptor 2 family. LN-TM7 subfamily. As to quaternary structure, heterodimer of 2 chains generated by proteolytic processing; the large extracellular N-terminal fragment and the membrane-bound C-terminal fragment predominantly remain associated and non-covalently linked. Interacts (via olfactomedin-like domain) with FLRT1 (via extracellular domain). Interacts (via olfactomedin-like domain) with FLRT2 (via extracellular domain). Interacts (via olfactomedin-like domain) with FLRT3 (via extracellular domain); the interaction is direct. Interacts (via extracellular domain) with TENM1. Interacts (via extracellular domain) with TENM2. Interacts (via extracellular domain) with TENM3. Identified in a complex with FLRT3 and UNC5B; does not interact with UNC5B by itself. Identified in a complex with FLRT3 and UNC5D; does not interact with UNC5D by itself. In terms of assembly, interacts (via PDZ-binding motif) with SHANK3. Interacts (via PDZ-binding motif) with DLG4. Post-translationally, autoproteolytically processed at the GPS region of the GAIN-B domain; this cleavage modulates receptor activity. Predominantly expressed in brain, followed by heart, placenta, pancreas, kidney and testis.

It is found in the cell membrane. It localises to the postsynaptic cell membrane. Its subcellular location is the cell projection. The protein resides in the axon. The protein localises to the cell junction. Forms a heterodimer of 2 chains generated by proteolytic processing that remain associated through non-covalent interactions mediated by the GAIN-B domain. In the inactivated receptor, the Stachel sequence (also named stalk) is embedded in the GAIN-B domain, where it adopts a beta-strand conformation. On activation, the Stachel moves into the 7 transmembrane region and adopts a twisted hook-shaped configuration that forms contacts within the receptor, leading to coupling of a G-alpha protein, which activates signaling. The cleaved GAIN-B and N-terminal domains can then dissociate from the rest of the receptor. In terms of biological role, orphan adhesion G-protein coupled receptor (aGPCR), which mediates synapse specificity. Ligand binding causes a conformation change that triggers signaling via guanine nucleotide-binding proteins (G proteins) and modulates the activity of downstream effectors. ADGRL3 is coupled with different classes of G alpha proteins, such as G(12)/G(13), G(s), G(i) or G(q), depending on the context. Coupling to G(12)/G(13) G proteins, which mediates the activation Rho small GTPases is the most efficient. Following G-protein coupled receptor activation, associates with cell adhesion molecules that are expressed at the surface of adjacent cells to direct synapse specificity. Specifically mediates the establishment of Schaffer-collateral synapses formed by CA3-region axons on CA1-region pyramidal neurons in the hippocampus. Localizes to postsynaptic spines in excitatory synapses in the S.oriens and S.radiatum and interacts with presynaptic cell adhesion molecules FLRT3 and TENM2, promoting synapse formation. Plays a role in the development of glutamatergic synapses in the cortex. Important in determining the connectivity rates between the principal neurons in the cortex. Orphan adhesion G-protein coupled receptor (aGPCR), which mediates synapse specificity. Ligand binding causes a conformation change that triggers signaling via guanine nucleotide-binding proteins (G proteins) and modulates the activity of downstream effectors, such as adenylate cyclase. Isoform 1 is specifically coupled to G(s) G proteins and mediates activation of adenylate cyclase activity. Following G-protein coupled receptor activation, undergoes liquid-liquid phase transition, associates with (1) cell adhesion molecules that are expressed at the surface of adjacent cells, as well as (2) PDZ-containing proteins, such as SHANK3 and DLG4, in the cytoplasm to direct synapse formation. The polypeptide is Adhesion G protein-coupled receptor L3 (Rattus norvegicus (Rat)).